The sequence spans 275 residues: Large ribosomal subunit protein uL2 (275 aa).

Residues S38–H53 are compositionally biased toward polar residues. 2 disordered regions span residues S38–Q60 and A224–R257.

The protein belongs to the universal ribosomal protein uL2 family. In terms of assembly, part of the 50S ribosomal subunit. Forms a bridge to the 30S subunit in the 70S ribosome.

Functionally, one of the primary rRNA binding proteins. Required for association of the 30S and 50S subunits to form the 70S ribosome, for tRNA binding and peptide bond formation. It has been suggested to have peptidyltransferase activity; this is somewhat controversial. Makes several contacts with the 16S rRNA in the 70S ribosome. The chain is Large ribosomal subunit protein uL2 from Burkholderia pseudomallei (strain 1106a).